We begin with the raw amino-acid sequence, 488 residues long: MEALNARFNVLQEMLMDIYESGKEDLETQIEHWKLLRQEQALLFFARKHSIMRLGYQPVPPMAVSETKAKQAIGMMLTLQSLQKSPFGKEKWTLVNTSLETYNAPPAQCFKKGPYNIEVIFDGDPENLMVYTAWKEIYFVDSDDMWQKVQGEVDYAGAYYKDGTIKQYYVTFADDAVRYGTSGQYEVRINNETVFAPVTSSTPPSTGLRESSNASPVHDTVDETPTSTTATTTTFSTTTATATATGAPELSSKTGTRKGRYGRKDSSPTAASNSRKEVSRRRSRSRTRTRRREASTSRSQKASRSRSRSRSTSRGSRGSGGSVTTSRDSSPKRTRRGRGRGGRSRRSPTPTSTSKRERRRSRSRGGEPVSGGVGISPDKVGSRVQTVSGRHLGRLGRLLEEASDPPVILLRGDPNILKCYRYRDKKRKLGLVKHYSTTWSWVGVDGNERIGRSRMLLSFTSNSTRSQYVKIMKLPKGVEWSFGNFDKL.

The interval Met-1–Ser-201 is transactivation domain. The segment covering Ala-196–Ser-215 has biased composition (polar residues). Residues Ala-196–Val-384 form a disordered region. Residues Thr-224–Thr-245 show a composition bias toward low complexity. Basic residues-rich tracts occupy residues Val-278–Arg-291 and Lys-301–Ser-311. A compositionally biased stretch (low complexity) spans Thr-312–Asp-328. The segment covering Lys-332 to Arg-346 has biased composition (basic residues). The segment at Asp-404 to Leu-488 is DNA-binding domain.

It belongs to the papillomaviridae E2 protein family. In terms of assembly, binds DNA as homodimer. Interacts with protein E1; this interaction greatly increases E1 DNA-binding activity. Interacts with protein L1; this interaction enhances E2-dependent replication and transcription activation. Interacts with protein L2; this interaction inhibits E2 transcriptional activity but not DNA replication function E2. Interacts with protein E7; this interaction inhibits E7 oncogenic activity. Interacts with host TAF1; this interaction modulates E2-dependent transcriptional regulation. Interacts with host BRD4; this interaction mediates E2 transcriptional activation function. Additionally, the interaction with host BRD4 on mitotic chromosomes mediates tethering of the viral genome. Interacts with host TOPBP1; this interaction is required for optimal viral DNA replication. Post-translationally, phosphorylated.

It localises to the host nucleus. Its function is as follows. Plays a role in the initiation of viral DNA replication. A dimer of E2 interacts with a dimer of E1 in order to improve specificity of E1 DNA binding activity. Once the complex recognizes and binds DNA at specific sites, the E2 dimer is removed from DNA. E2 also regulates viral transcription through binding to the E2RE response element (5'-ACCNNNNNNGGT-3') present in multiple copies in the regulatory regions of the viral genome. Activates or represses transcription depending on E2RE's position with regards to proximal promoter elements including the TATA-box. Repression occurs by sterically hindering the assembly of the transcription initiation complex. In Homo sapiens (Human), this protein is Regulatory protein E2.